The chain runs to 154 residues: Interleukin-2 (154 aa).

The signal sequence occupies residues 1 to 20; it reads MYKMQLLSCIALTLALVANG. O-linked (GalNAc...) threonine glycosylation occurs at Thr23. Cys78 and Cys126 are oxidised to a cystine.

This sequence belongs to the IL-2 family.

It is found in the secreted. Functionally, cytokine produced by activated CD4-positive helper T-cells and to a lesser extend activated CD8-positive T-cells and natural killer (NK) cells that plays pivotal roles in the immune response and tolerance. Binds to a receptor complex composed of either the high-affinity trimeric IL-2R (IL2RA/CD25, IL2RB/CD122 and IL2RG/CD132) or the low-affinity dimeric IL-2R (IL2RB and IL2RG). Interaction with the receptor leads to oligomerization and conformation changes in the IL-2R subunits resulting in downstream signaling starting with phosphorylation of JAK1 and JAK3. In turn, JAK1 and JAK3 phosphorylate the receptor to form a docking site leading to the phosphorylation of several substrates including STAT5. This process leads to activation of several pathways including STAT, phosphoinositide-3-kinase/PI3K and mitogen-activated protein kinase/MAPK pathways. Functions as a T-cell growth factor and can increase NK-cell cytolytic activity as well. Promotes strong proliferation of activated B-cells and subsequently immunoglobulin production. Plays a pivotal role in regulating the adaptive immune system by controlling the survival and proliferation of regulatory T-cells, which are required for the maintenance of immune tolerance. Moreover, participates in the differentiation and homeostasis of effector T-cell subsets, including Th1, Th2, Th17 as well as memory CD8-positive T-cells. The chain is Interleukin-2 (IL2) from Delphinapterus leucas (Beluga whale).